Here is a 91-residue protein sequence, read N- to C-terminus: Probable Fe(2+)-trafficking protein (91 aa).

This sequence belongs to the Fe(2+)-trafficking protein family.

Its function is as follows. Could be a mediator in iron transactions between iron acquisition and iron-requiring processes, such as synthesis and/or repair of Fe-S clusters in biosynthetic enzymes. The protein is Probable Fe(2+)-trafficking protein of Burkholderia multivorans (strain ATCC 17616 / 249).